The chain runs to 75 residues: Putative sulfur carrier protein MJ0990 (75 aa).

Catalysis depends on Cys-15, which acts as the Cysteine persulfide intermediate.

Belongs to the sulfur carrier protein TusA family.

The sequence is that of Putative sulfur carrier protein MJ0990 from Methanocaldococcus jannaschii (strain ATCC 43067 / DSM 2661 / JAL-1 / JCM 10045 / NBRC 100440) (Methanococcus jannaschii).